Reading from the N-terminus, the 347-residue chain is Spermidine/putrescine import ATP-binding protein PotA (347 aa).

The region spanning 6–236 (IEIKNVYKEF…PKNAFVAKFI (231 aa)) is the ABC transporter domain. 38–45 (GPSGCGKT) is an ATP binding site.

This sequence belongs to the ABC transporter superfamily. Spermidine/putrescine importer (TC 3.A.1.11.1) family. As to quaternary structure, the complex is composed of two ATP-binding proteins (PotA), two transmembrane proteins (PotB and PotC) and a solute-binding protein (PotD).

It localises to the cell membrane. The catalysed reaction is ATP + H2O + polyamine-[polyamine-binding protein]Side 1 = ADP + phosphate + polyamineSide 2 + [polyamine-binding protein]Side 1.. Part of the ABC transporter complex PotABCD involved in spermidine/putrescine import. Responsible for energy coupling to the transport system. The polypeptide is Spermidine/putrescine import ATP-binding protein PotA (Clostridium novyi (strain NT)).